Consider the following 100-residue polypeptide: NADH-quinone oxidoreductase subunit K (100 aa).

3 helical membrane-spanning segments follow: residues 1 to 21, 28 to 48, and 64 to 84; these read MIGLNHYLIVSGLLFCIGLAG, ILLLFFSTEIMLNAINIGFIA, and FIIAIAASEVAIGLGLVILWF.

This sequence belongs to the complex I subunit 4L family. NDH-1 is composed of 14 different subunits. Subunits NuoA, H, J, K, L, M, N constitute the membrane sector of the complex.

It localises to the cell inner membrane. The enzyme catalyses a quinone + NADH + 5 H(+)(in) = a quinol + NAD(+) + 4 H(+)(out). NDH-1 shuttles electrons from NADH, via FMN and iron-sulfur (Fe-S) centers, to quinones in the respiratory chain. The immediate electron acceptor for the enzyme in this species is believed to be ubiquinone. Couples the redox reaction to proton translocation (for every two electrons transferred, four hydrogen ions are translocated across the cytoplasmic membrane), and thus conserves the redox energy in a proton gradient. The chain is NADH-quinone oxidoreductase subunit K from Helicobacter pylori (strain G27).